The primary structure comprises 299 residues: ATP phosphoribosyltransferase (299 aa).

Belongs to the ATP phosphoribosyltransferase family. Long subfamily. Mg(2+) serves as cofactor.

It is found in the cytoplasm. It carries out the reaction 1-(5-phospho-beta-D-ribosyl)-ATP + diphosphate = 5-phospho-alpha-D-ribose 1-diphosphate + ATP. Its pathway is amino-acid biosynthesis; L-histidine biosynthesis; L-histidine from 5-phospho-alpha-D-ribose 1-diphosphate: step 1/9. Its activity is regulated as follows. Feedback inhibited by histidine. In terms of biological role, catalyzes the condensation of ATP and 5-phosphoribose 1-diphosphate to form N'-(5'-phosphoribosyl)-ATP (PR-ATP). Has a crucial role in the pathway because the rate of histidine biosynthesis seems to be controlled primarily by regulation of HisG enzymatic activity. This is ATP phosphoribosyltransferase from Shewanella piezotolerans (strain WP3 / JCM 13877).